Consider the following 225-residue polypeptide: 2-C-methyl-D-erythritol 4-phosphate cytidylyltransferase (225 aa).

This sequence belongs to the IspD/TarI cytidylyltransferase family. IspD subfamily.

It catalyses the reaction 2-C-methyl-D-erythritol 4-phosphate + CTP + H(+) = 4-CDP-2-C-methyl-D-erythritol + diphosphate. Its pathway is isoprenoid biosynthesis; isopentenyl diphosphate biosynthesis via DXP pathway; isopentenyl diphosphate from 1-deoxy-D-xylulose 5-phosphate: step 2/6. Catalyzes the formation of 4-diphosphocytidyl-2-C-methyl-D-erythritol from CTP and 2-C-methyl-D-erythritol 4-phosphate (MEP). In Prochlorococcus marinus (strain NATL2A), this protein is 2-C-methyl-D-erythritol 4-phosphate cytidylyltransferase.